The chain runs to 163 residues: Transcription elongation factor GreA (163 aa).

Residues 12 to 73 (YEKIQKEFEA…ELSDLLARAQ (62 aa)) adopt a coiled-coil conformation.

It belongs to the GreA/GreB family.

In terms of biological role, necessary for efficient RNA polymerase transcription elongation past template-encoded arresting sites. The arresting sites in DNA have the property of trapping a certain fraction of elongating RNA polymerases that pass through, resulting in locked ternary complexes. Cleavage of the nascent transcript by cleavage factors such as GreA or GreB allows the resumption of elongation from the new 3'terminus. GreA releases sequences of 2 to 3 nucleotides. The sequence is that of Transcription elongation factor GreA from Nitratiruptor sp. (strain SB155-2).